The chain runs to 180 residues: Putative 5'(3')-deoxyribonucleotidase (180 aa).

Asp9 (nucleophile) is an active-site residue. Mg(2+) is bound by residues Asp9, Asp11, and Asp135. Asp11 serves as the catalytic Proton donor.

It belongs to the 5'(3')-deoxyribonucleotidase family. Mg(2+) is required as a cofactor.

In terms of biological role, dephosphorylates the 5' and 2'(3')-phosphates of deoxyribonucleotides. The sequence is that of Putative 5'(3')-deoxyribonucleotidase from Staphylococcus aureus (strain Mu50 / ATCC 700699).